A 478-amino-acid polypeptide reads, in one-letter code: Glycogen synthase (478 aa).

K15 provides a ligand contact to ADP-alpha-D-glucose.

It belongs to the glycosyltransferase 1 family. Bacterial/plant glycogen synthase subfamily.

It carries out the reaction [(1-&gt;4)-alpha-D-glucosyl](n) + ADP-alpha-D-glucose = [(1-&gt;4)-alpha-D-glucosyl](n+1) + ADP + H(+). Its pathway is glycan biosynthesis; glycogen biosynthesis. In terms of biological role, synthesizes alpha-1,4-glucan chains using ADP-glucose. This Clostridium botulinum (strain Alaska E43 / Type E3) protein is Glycogen synthase.